Consider the following 185-residue polypeptide: MMGKLIWLMGPSGSGKDSLLAELRLREQTQLLVAHRYITRDASAGSENHIALSEQEFFTRAGQNLLALSWHANGLYYGVGVEIDLWLHAGFDVLVNGSRAHLPQARARYQSALLPICLQVSPEILRQRLENRGRENASEINARLARAARYTPQDCHTLNNDGSLRQSVDTLLTLIHQKEKHHACL.

G10 to D17 is an ATP binding site.

This sequence belongs to the ribose 1,5-bisphosphokinase family.

It carries out the reaction alpha-D-ribose 1,5-bisphosphate + ATP = 5-phospho-alpha-D-ribose 1-diphosphate + ADP. Its pathway is metabolic intermediate biosynthesis; 5-phospho-alpha-D-ribose 1-diphosphate biosynthesis; 5-phospho-alpha-D-ribose 1-diphosphate from D-ribose 5-phosphate (route II): step 3/3. Its function is as follows. Catalyzes the phosphorylation of ribose 1,5-bisphosphate to 5-phospho-D-ribosyl alpha-1-diphosphate (PRPP). The protein is Ribose 1,5-bisphosphate phosphokinase PhnN of Escherichia coli O157:H7.